Reading from the N-terminus, the 519-residue chain is MAFLHFDNRFIRELPGDPLTLNQPRQVHAAFWSAVTPAPVPQPQLIASSAEVAALLGISLAELQQPAWVAALSGNGLLDGMSPFATCYGGHQFGNWAGQLGDGRAISLGELIHNDLRWELQLKGAGVTPYSRRGDGKAVLRSSIREFLCSEAMFHLGVPTTRALSLVLTGEQIWRDMFYDGNPQQEPGAIVCRVAPSFIRFGHFQLPAMRGESDLLNQLIDFTIDRDFPHLSAQPATVRRGVWFSEVCITTAKLMVEWTRVGFVHGVMNTDNMSILGLTIDYGPYGWVDNFDLNWTPNTTDAEGLRYCFGRQPAIARWNLERLAEALGTVMTDHAILAQGIEMFDETFAQEMAAMLAAKLGWQQWLPEDSELVNRLFDLLQQAEVDMTLFFRRLALVDVSAPDLTVLADAFYRDDLFCQHQPAFTQWLTNYSQRVLSEGVLPAERAARMNQVNPVYVLRNYLAQQVIDAAEQGNYQPIAELLEVLRQPYTEQSGKEAYAQKRPDWARHKPGCSMLSCSS.

Residues glycine 101, glycine 103, arginine 104, lysine 123, aspartate 135, glycine 136, arginine 193, and arginine 200 each contribute to the ATP site. Aspartate 271 acts as the Proton acceptor in catalysis. Mg(2+) contacts are provided by asparagine 272 and aspartate 281. Residue aspartate 281 participates in ATP binding.

It belongs to the SELO family. The cofactor is Mg(2+). Mn(2+) is required as a cofactor.

It carries out the reaction L-seryl-[protein] + ATP = 3-O-(5'-adenylyl)-L-seryl-[protein] + diphosphate. It catalyses the reaction L-threonyl-[protein] + ATP = 3-O-(5'-adenylyl)-L-threonyl-[protein] + diphosphate. The enzyme catalyses L-tyrosyl-[protein] + ATP = O-(5'-adenylyl)-L-tyrosyl-[protein] + diphosphate. The catalysed reaction is L-histidyl-[protein] + UTP = N(tele)-(5'-uridylyl)-L-histidyl-[protein] + diphosphate. It carries out the reaction L-seryl-[protein] + UTP = O-(5'-uridylyl)-L-seryl-[protein] + diphosphate. It catalyses the reaction L-tyrosyl-[protein] + UTP = O-(5'-uridylyl)-L-tyrosyl-[protein] + diphosphate. In terms of biological role, nucleotidyltransferase involved in the post-translational modification of proteins. It can catalyze the addition of adenosine monophosphate (AMP) or uridine monophosphate (UMP) to a protein, resulting in modifications known as AMPylation and UMPylation. The sequence is that of Protein nucleotidyltransferase YdiU from Tolumonas auensis (strain DSM 9187 / NBRC 110442 / TA 4).